Consider the following 433-residue polypeptide: 3-phosphoshikimate 1-carboxyvinyltransferase (433 aa).

Lys15, Ser16, and Arg20 together coordinate 3-phosphoshikimate. Phosphoenolpyruvate is bound at residue Lys15. Gly96 and Arg124 together coordinate phosphoenolpyruvate. 3-phosphoshikimate-binding residues include Ser169, Gln171, Asp318, and Lys345. A phosphoenolpyruvate-binding site is contributed by Gln171. Asp318 functions as the Proton acceptor in the catalytic mechanism. The phosphoenolpyruvate site is built by Arg349 and Arg393.

It belongs to the EPSP synthase family. As to quaternary structure, monomer.

The protein localises to the cytoplasm. The enzyme catalyses 3-phosphoshikimate + phosphoenolpyruvate = 5-O-(1-carboxyvinyl)-3-phosphoshikimate + phosphate. It functions in the pathway metabolic intermediate biosynthesis; chorismate biosynthesis; chorismate from D-erythrose 4-phosphate and phosphoenolpyruvate: step 6/7. In terms of biological role, catalyzes the transfer of the enolpyruvyl moiety of phosphoenolpyruvate (PEP) to the 5-hydroxyl of shikimate-3-phosphate (S3P) to produce enolpyruvyl shikimate-3-phosphate and inorganic phosphate. The protein is 3-phosphoshikimate 1-carboxyvinyltransferase of Chlorobium phaeovibrioides (strain DSM 265 / 1930) (Prosthecochloris vibrioformis (strain DSM 265)).